Consider the following 167-residue polypeptide: NADH-quinone oxidoreductase subunit B 2 (167 aa).

Residues Cys38, Cys39, Cys103, and Cys132 each contribute to the [4Fe-4S] cluster site.

The protein belongs to the complex I 20 kDa subunit family. NDH-1 is composed of 14 different subunits. Subunits NuoB, C, D, E, F, and G constitute the peripheral sector of the complex. It depends on [4Fe-4S] cluster as a cofactor.

The protein resides in the cell inner membrane. The catalysed reaction is a quinone + NADH + 5 H(+)(in) = a quinol + NAD(+) + 4 H(+)(out). Functionally, NDH-1 shuttles electrons from NADH, via FMN and iron-sulfur (Fe-S) centers, to quinones in the respiratory chain. The immediate electron acceptor for the enzyme in this species is believed to be ubiquinone. Couples the redox reaction to proton translocation (for every two electrons transferred, four hydrogen ions are translocated across the cytoplasmic membrane), and thus conserves the redox energy in a proton gradient. In Rhizobium meliloti (strain 1021) (Ensifer meliloti), this protein is NADH-quinone oxidoreductase subunit B 2.